A 315-amino-acid polypeptide reads, in one-letter code: Energy-coupling factor transporter ATP-binding protein EcfA2 (315 aa).

Residues 31–275 (IILDNVSYTY…QELLSKIQIE (245 aa)) form the ABC transporter domain. 68–75 (GTTGSGKS) lines the ATP pocket.

The protein belongs to the ABC transporter superfamily. Energy-coupling factor EcfA family. Forms a stable energy-coupling factor (ECF) transporter complex composed of 2 membrane-embedded substrate-binding proteins (S component), 2 ATP-binding proteins (A component) and 2 transmembrane proteins (T component).

The protein localises to the cell membrane. ATP-binding (A) component of a common energy-coupling factor (ECF) ABC-transporter complex. Unlike classic ABC transporters this ECF transporter provides the energy necessary to transport a number of different substrates. The polypeptide is Energy-coupling factor transporter ATP-binding protein EcfA2 (Mesoplasma florum (strain ATCC 33453 / NBRC 100688 / NCTC 11704 / L1) (Acholeplasma florum)).